The primary structure comprises 473 residues: Glycosyl hydrolase family 109 protein 2 (473 aa).

Residues 1-31 constitute a signal peptide (tat-type signal); the sequence is MSIFSSRRQFLKSLGLAAGAAAAGNALPGKA. NAD(+)-binding positions include 77-78, D99, 148-151, 168-169, and N197; these read GR, WSSH, and EV. Substrate contacts are provided by residues Y226, R244, 256 to 259, and Y339; that span reads YPTH. Y256 lines the NAD(+) pocket.

This sequence belongs to the Gfo/Idh/MocA family. Glycosyl hydrolase 109 subfamily. The cofactor is NAD(+). In terms of processing, predicted to be exported by the Tat system. The position of the signal peptide cleavage has not been experimentally proven.

Glycosidase. The polypeptide is Glycosyl hydrolase family 109 protein 2 (Akkermansia muciniphila (strain ATCC BAA-835 / DSM 22959 / JCM 33894 / BCRC 81048 / CCUG 64013 / CIP 107961 / Muc)).